The chain runs to 1362 residues: DNA-directed RNA polymerase subunit beta (1362 aa).

Belongs to the RNA polymerase beta chain family. As to quaternary structure, the RNAP catalytic core consists of 2 alpha, 1 beta, 1 beta' and 1 omega subunit. When a sigma factor is associated with the core the holoenzyme is formed, which can initiate transcription.

It carries out the reaction RNA(n) + a ribonucleoside 5'-triphosphate = RNA(n+1) + diphosphate. DNA-dependent RNA polymerase catalyzes the transcription of DNA into RNA using the four ribonucleoside triphosphates as substrates. The polypeptide is DNA-directed RNA polymerase subunit beta (Acinetobacter baumannii (strain AB307-0294)).